We begin with the raw amino-acid sequence, 245 residues long: Probable proteasome subunit alpha type-2 (245 aa).

Belongs to the peptidase T1A family. In terms of assembly, the 26S proteasome consists of a 20S proteasome core and two 19S regulatory subunits. The 20S proteasome core is composed of 28 subunits that are arranged in four stacked rings, resulting in a barrel-shaped structure. The two end rings are each formed by seven alpha subunits, and the two central rings are each formed by seven beta subunits. The catalytic chamber with the active sites is on the inside of the barrel.

It is found in the cytoplasm. The protein localises to the nucleus. Functionally, the proteasome is a multicatalytic proteinase complex which is characterized by its ability to cleave peptides with Arg, Phe, Tyr, Leu, and Glu adjacent to the leaving group at neutral or slightly basic pH. The proteasome has an ATP-dependent proteolytic activity. This Schizosaccharomyces pombe (strain 972 / ATCC 24843) (Fission yeast) protein is Probable proteasome subunit alpha type-2 (pre8).